A 356-amino-acid polypeptide reads, in one-letter code: Protein-glutamate methylesterase/protein-glutamine glutaminase 2 (356 aa).

Residues 4–121 (KVLIVDDSAV…KGFLEESSHE (118 aa)) enclose the Response regulatory domain. D55 is subject to 4-aspartylphosphate. One can recognise a CheB-type methylesterase domain in the interval 169 to 356 (FATTERIIAI…LELIAKAICR (188 aa)). Residues S181, H207, and D303 contribute to the active site.

The protein belongs to the CheB family. In terms of processing, phosphorylated by CheA. Phosphorylation of the N-terminal regulatory domain activates the methylesterase activity.

It localises to the cytoplasm. It carries out the reaction [protein]-L-glutamate 5-O-methyl ester + H2O = L-glutamyl-[protein] + methanol + H(+). The catalysed reaction is L-glutaminyl-[protein] + H2O = L-glutamyl-[protein] + NH4(+). Its function is as follows. Involved in chemotaxis. Part of a chemotaxis signal transduction system that modulates chemotaxis in response to various stimuli. Catalyzes the demethylation of specific methylglutamate residues introduced into the chemoreceptors (methyl-accepting chemotaxis proteins or MCP) by CheR. Also mediates the irreversible deamidation of specific glutamine residues to glutamic acid. The protein is Protein-glutamate methylesterase/protein-glutamine glutaminase 2 of Chromobacterium violaceum (strain ATCC 12472 / DSM 30191 / JCM 1249 / CCUG 213 / NBRC 12614 / NCIMB 9131 / NCTC 9757 / MK).